A 426-amino-acid polypeptide reads, in one-letter code: Histidinol dehydrogenase (426 aa).

Positions 130, 187, and 210 each coordinate NAD(+). Serine 233, glutamine 255, and histidine 258 together coordinate substrate. Residues glutamine 255 and histidine 258 each coordinate Zn(2+). Residues glutamate 323 and histidine 324 each act as proton acceptor in the active site. Residues histidine 324, aspartate 357, glutamate 411, and histidine 416 each coordinate substrate. Aspartate 357 is a Zn(2+) binding site. A Zn(2+)-binding site is contributed by histidine 416.

It belongs to the histidinol dehydrogenase family. It depends on Zn(2+) as a cofactor.

It catalyses the reaction L-histidinol + 2 NAD(+) + H2O = L-histidine + 2 NADH + 3 H(+). It functions in the pathway amino-acid biosynthesis; L-histidine biosynthesis; L-histidine from 5-phospho-alpha-D-ribose 1-diphosphate: step 9/9. In terms of biological role, catalyzes the sequential NAD-dependent oxidations of L-histidinol to L-histidinaldehyde and then to L-histidine. The chain is Histidinol dehydrogenase (hisD) from Aquifex aeolicus (strain VF5).